The chain runs to 415 residues: Beta-1,4-glucuronyltransferase 1 (415 aa).

The Cytoplasmic segment spans residues Met-1 to Arg-8. A helical; Signal-anchor for type II membrane protein transmembrane segment spans residues Cys-9–Leu-36. Topologically, residues His-37–Cys-415 are lumenal. Residue Asn-204 is glycosylated (N-linked (GlcNAc...) asparagine). Positions 227 and 229 each coordinate Mn(2+). N-linked (GlcNAc...) asparagine glycosylation is present at Asn-300.

The protein belongs to the glycosyltransferase 49 family. As to quaternary structure, interacts with LARGE1 and LARGE2. It depends on Mn(2+) as a cofactor. As to expression, in the adult, highly expressed in heart, brain, skeletal muscle and kidney and to a lesser extent in placenta, pancreas, spleen, prostate, testis, ovary, small intestine and colon. Very weak expression in lung, liver, thymus and peripheral blood leukocytes. In fetal highly expressed in brain and kidney and to a lesser extent in lung and liver.

The protein resides in the golgi apparatus membrane. It catalyses the reaction 3-O-[beta-D-Xyl-(1-&gt;4)-Rib-ol-P-Rib-ol-P-3-beta-D-GalNAc-(1-&gt;3)-beta-D-GlcNAc-(1-&gt;4)-(O-6-P-alpha-D-Man)]-Thr-[protein] + UDP-alpha-D-glucuronate = 3-O-[beta-D-GlcA-(1-&gt;3)-beta-D-Xyl-(1-&gt;4)-Rib-ol-P-Rib-ol-P-3-beta-D-GalNAc-(1-&gt;3)-beta-D-GlcNAc-(1-&gt;4)-(O-6-P-alpha-D-Man)]-Thr-[protein] + UDP + H(+). The protein operates within protein modification; protein glycosylation. In terms of biological role, beta-1,4-glucuronyltransferase involved in O-mannosylation of alpha-dystroglycan (DAG1). Transfers a glucuronic acid (GlcA) residue onto a xylose (Xyl) acceptor to produce the glucuronyl-beta-1,4-xylose-beta disaccharide primer, which is further elongated by LARGE1, during synthesis of phosphorylated O-mannosyl glycan. Phosphorylated O-mannosyl glycan is a carbohydrate structure present in alpha-dystroglycan (DAG1), which is required for binding laminin G-like domain-containing extracellular proteins with high affinity. Required for axon guidance; via its function in O-mannosylation of alpha-dystroglycan (DAG1). The polypeptide is Beta-1,4-glucuronyltransferase 1 (Homo sapiens (Human)).